The chain runs to 88 residues: Small ribosomal subunit protein bS20 (88 aa).

The tract at residues 1–25 (MANTPSAKKAARKIERRTAVNRARR) is disordered.

The protein belongs to the bacterial ribosomal protein bS20 family.

In terms of biological role, binds directly to 16S ribosomal RNA. The protein is Small ribosomal subunit protein bS20 of Azorhizobium caulinodans (strain ATCC 43989 / DSM 5975 / JCM 20966 / LMG 6465 / NBRC 14845 / NCIMB 13405 / ORS 571).